Here is a 320-residue protein sequence, read N- to C-terminus: Glutaconate CoA-transferase subunit A (320 aa).

It belongs to the 3-oxoacid CoA-transferase subunit A family. Heterooctamer of four A and four B subunits.

It localises to the cytoplasm. The catalysed reaction is trans-glutaconate + acetyl-CoA = (2E)-glutaconyl-CoA + acetate. It functions in the pathway amino-acid degradation; L-glutamate degradation via hydroxyglutarate pathway; crotonoyl-CoA from L-glutamate: step 3/5. In terms of biological role, catalyzes the transfer of the CoA moiety from acetyl-CoA to (R)-2-hydroxyglutarate and related compounds like glutaconate. This chain is Glutaconate CoA-transferase subunit A (gctA), found in Acidaminococcus fermentans (strain ATCC 25085 / DSM 20731 / CCUG 9996 / CIP 106432 / VR4).